We begin with the raw amino-acid sequence, 319 residues long: Triacylglycerol lipase (319 aa).

Residues 10 to 288 enclose the AB hydrolase-1 domain; it reads PVILVHGLAG…TSYHWNHLDE (279 aa). Residue Leu-17 participates in substrate binding. The active-site Nucleophile is the Ser-87. Position 88 (Gln-88) interacts with substrate. An intrachain disulfide couples Cys-190 to Cys-269. Asp-241 lines the Ca(2+) pocket. Active-site charge relay system residues include Asp-263 and His-285. Residues Asp-287, Gln-291, and Val-295 each coordinate Ca(2+).

The protein belongs to the AB hydrolase superfamily. Pseudomonas lipase family. In terms of assembly, monomer. Interacts with lipase-specific foldase Lif. Ca(2+) serves as cofactor.

It localises to the secreted. The catalysed reaction is a triacylglycerol + H2O = a diacylglycerol + a fatty acid + H(+). Catalyzes the hydrolysis of triacylglycerol. The protein is Triacylglycerol lipase of Pseudarthrobacter phenanthrenivorans (Arthrobacter phenanthrenivorans).